The sequence spans 245 residues: Ribonuclease PH (245 aa).

Phosphate is bound by residues R86 and 124–126 (GTR).

It belongs to the RNase PH family. As to quaternary structure, homohexameric ring arranged as a trimer of dimers.

It catalyses the reaction tRNA(n+1) + phosphate = tRNA(n) + a ribonucleoside 5'-diphosphate. In terms of biological role, phosphorolytic 3'-5' exoribonuclease that plays an important role in tRNA 3'-end maturation. Removes nucleotide residues following the 3'-CCA terminus of tRNAs; can also add nucleotides to the ends of RNA molecules by using nucleoside diphosphates as substrates, but this may not be physiologically important. Probably plays a role in initiation of 16S rRNA degradation (leading to ribosome degradation) during starvation. The polypeptide is Ribonuclease PH (Bacillus mycoides (strain KBAB4) (Bacillus weihenstephanensis)).